A 96-amino-acid chain; its full sequence is Putative pterin-4-alpha-carbinolamine dehydratase (96 aa).

The protein belongs to the pterin-4-alpha-carbinolamine dehydratase family.

It catalyses the reaction (4aS,6R)-4a-hydroxy-L-erythro-5,6,7,8-tetrahydrobiopterin = (6R)-L-erythro-6,7-dihydrobiopterin + H2O. The chain is Putative pterin-4-alpha-carbinolamine dehydratase from Prochlorococcus marinus (strain MIT 9303).